The chain runs to 303 residues: Hydroxyethylthiazole kinase (303 aa).

The span at 1–15 (MTTASTTPNSDTSNL) shows a compositional bias: polar residues. Positions 1–23 (MTTASTTPNSDTSNLHEVAPDDP) are disordered. Methionine 67 contacts substrate. Positions 142 and 206 each coordinate ATP. Substrate is bound at residue glycine 233.

This sequence belongs to the Thz kinase family. Requires Mg(2+) as cofactor.

The enzyme catalyses 5-(2-hydroxyethyl)-4-methylthiazole + ATP = 4-methyl-5-(2-phosphooxyethyl)-thiazole + ADP + H(+). Its pathway is cofactor biosynthesis; thiamine diphosphate biosynthesis; 4-methyl-5-(2-phosphoethyl)-thiazole from 5-(2-hydroxyethyl)-4-methylthiazole: step 1/1. Functionally, catalyzes the phosphorylation of the hydroxyl group of 4-methyl-5-beta-hydroxyethylthiazole (THZ). This chain is Hydroxyethylthiazole kinase, found in Bifidobacterium animalis subsp. lactis (strain AD011).